A 163-amino-acid chain; its full sequence is NADPH-dependent 7-cyano-7-deazaguanine reductase (163 aa).

The span at 1-10 (MSKPPRRSPR) shows a compositional bias: basic residues. A disordered region spans residues 1 to 23 (MSKPPRRSPRKPTPASPELQLGH). Catalysis depends on C61, which acts as the Thioimide intermediate. Catalysis depends on D68, which acts as the Proton donor. Residues 83–85 (LES) and 102–103 (HE) contribute to the substrate site.

It belongs to the GTP cyclohydrolase I family. QueF type 1 subfamily.

The protein resides in the cytoplasm. The catalysed reaction is 7-aminomethyl-7-carbaguanine + 2 NADP(+) = 7-cyano-7-deazaguanine + 2 NADPH + 3 H(+). Its pathway is tRNA modification; tRNA-queuosine biosynthesis. In terms of biological role, catalyzes the NADPH-dependent reduction of 7-cyano-7-deazaguanine (preQ0) to 7-aminomethyl-7-deazaguanine (preQ1). The protein is NADPH-dependent 7-cyano-7-deazaguanine reductase of Rhodopseudomonas palustris (strain BisA53).